The sequence spans 571 residues: Urease subunit alpha (571 aa).

Positions 133 to 571 (AGIDTHIHFI…VALNQRYFFS (439 aa)) constitute a Urease domain. Residues His-138, His-140, and Lys-221 each coordinate Ni(2+). At Lys-221 the chain carries N6-carboxylysine. His-223 lines the substrate pocket. Ni(2+)-binding residues include His-250 and His-276. Catalysis depends on His-324, which acts as the Proton donor. Asp-364 is a binding site for Ni(2+).

This sequence belongs to the metallo-dependent hydrolases superfamily. Urease alpha subunit family. In terms of assembly, heterotrimer of UreA (gamma), UreB (beta) and UreC (alpha) subunits. Three heterotrimers associate to form the active enzyme. The cofactor is Ni cation. In terms of processing, carboxylation allows a single lysine to coordinate two nickel ions.

It localises to the cytoplasm. The catalysed reaction is urea + 2 H2O + H(+) = hydrogencarbonate + 2 NH4(+). Its pathway is nitrogen metabolism; urea degradation; CO(2) and NH(3) from urea (urease route): step 1/1. This Photorhabdus laumondii subsp. laumondii (strain DSM 15139 / CIP 105565 / TT01) (Photorhabdus luminescens subsp. laumondii) protein is Urease subunit alpha.